The sequence spans 659 residues: Tetratricopeptide repeat protein 30 homolog (659 aa).

7 TPR repeats span residues 3-36 (SQNM…LNGI), 43-76 (RAGL…VPDV), 143-176 (ATVK…GGFN), 178-210 (HIAY…GIRN), 391-424 (CRSA…RAWI), 450-483 (TWRL…NYDD), and 533-566 (CIVN…GSGA).

The protein belongs to the TTC30/dfy-1/fleer family.

It is found in the cell projection. The protein resides in the cilium. Functionally, required for polyglutamylation of axonemal tubulin in sensory cilia. Plays a role in anterograde intraflagellar transport (IFT), the process by which cilia precursors are transported from the base of the cilium to the site of their incorporation at the tip. This Aedes aegypti (Yellowfever mosquito) protein is Tetratricopeptide repeat protein 30 homolog.